The primary structure comprises 27 residues: Delta-conotoxin SuVIA (27 aa).

3 cysteine pairs are disulfide-bonded: Cys1–Cys17, Cys8–Cys21, and Cys16–Cys25.

The protein belongs to the conotoxin O1 superfamily. As to expression, expressed by the venom duct, in the proximal part (indicative of a defensive role).

Its subcellular location is the secreted. Functionally, this toxin activates voltage-gated sodium channels (Nav1.3/SCN3A (EC(50)=3.98 nM), Nav1.4/SCN4A (EC(50)=4.99 nM), Nav1.6/SCN8A (EC(50)=1.27 nM) and Nav1.7/SCN9A (EC(50)=2.42 nM)). It shifts the voltage-dependence of activation to more hyperpolarized potentials but has only little effect on channel inactivation. In vivo, it induces nocifensive or pain-like behaviors in mice when injected intraplantarly. This is coherent with the specific defensive role deduced from its proximal position in the venom gland. The polypeptide is Delta-conotoxin SuVIA (Conus suturatus (Sutured cone)).